A 511-amino-acid polypeptide reads, in one-letter code: Inactive cytochrome P450 monooxygenase cloA (511 aa).

The chain crosses the membrane as a helical span at residues 17–37 (ILLTAGLCVPCALVIHGIYNL). N-linked (GlcNAc...) asparagine glycosylation is found at Asn-81 and Asn-344. Residue Cys-450 coordinates heme.

The protein belongs to the cytochrome P450 family. Requires heme as cofactor.

Its subcellular location is the membrane. Its function is as follows. Inactive cytochrome P450 monooxygenase; part of the gene cluster that mediates the biosynthesis of fungal ergot alkaloid. DmaW catalyzes the first step of ergot alkaloid biosynthesis by condensing dimethylallyl diphosphate (DMAP) and tryptophan to form 4-dimethylallyl-L-tryptophan. The second step is catalyzed by the methyltransferase easF that methylates 4-dimethylallyl-L-tryptophan in the presence of S-adenosyl-L-methionine, resulting in the formation of 4-dimethylallyl-L-abrine. The catalase easC and the FAD-dependent oxidoreductase easE then transform 4-dimethylallyl-L-abrine to chanoclavine-I which is further oxidized by easD in the presence of NAD(+), resulting in the formation of chanoclavine-I aldehyde. Agroclavine dehydrogenase easG then mediates the conversion of chanoclavine-I aldehyde to agroclavine via a non-enzymatic adduct reaction: the substrate is an iminium intermediate that is formed spontaneously from chanoclavine-I aldehyde in the presence of glutathione. Further conversion of agroclavine to paspalic acid is a two-step process involving oxidation of agroclavine to elymoclavine and of elymoclavine to paspalic acid, the second step being performed by the elymoclavine oxidase cloA. However, cloA does not encode a functional enzyme indicating that C.fusiformis terminates its ergot alkaloid pathway at elymoclavine. The protein is Inactive cytochrome P450 monooxygenase cloA of Claviceps fusiformis (Ergot fungus).